A 219-amino-acid chain; its full sequence is Proteasome subunit beta (219 aa).

Residues 1–14 (MISNSEYHKEYMKG) constitute a propeptide, removed in mature form; by autocatalysis. Residue threonine 15 is the Nucleophile of the active site.

Belongs to the peptidase T1B family. In terms of assembly, the 20S proteasome core is composed of 14 alpha and 14 beta subunits that assemble into four stacked heptameric rings, resulting in a barrel-shaped structure. The two inner rings, each composed of seven catalytic beta subunits, are sandwiched by two outer rings, each composed of seven alpha subunits. The catalytic chamber with the active sites is on the inside of the barrel. Has a gated structure, the ends of the cylinder being occluded by the N-termini of the alpha-subunits. Is capped at one or both ends by the proteasome regulatory ATPase, PAN.

It localises to the cytoplasm. The enzyme catalyses Cleavage of peptide bonds with very broad specificity.. With respect to regulation, the formation of the proteasomal ATPase PAN-20S proteasome complex, via the docking of the C-termini of PAN into the intersubunit pockets in the alpha-rings, triggers opening of the gate for substrate entry. Interconversion between the open-gate and close-gate conformations leads to a dynamic regulation of the 20S proteasome proteolysis activity. In terms of biological role, component of the proteasome core, a large protease complex with broad specificity involved in protein degradation. In Methanococcus maripaludis (strain C5 / ATCC BAA-1333), this protein is Proteasome subunit beta.